The sequence spans 452 residues: MKETIVAQATPIGRGGVGILRVSGPLAQQVAQEILGKTLTPRLAHYLPFKDNDGEILDQGIALFFKAPNSFTGEDVLELQGHGGQVILDLLLKRILTINGIRIARTGEFSEQAFLNDKLDLAQAEAIADLIDATSEQAARSALKSLQGEFSNKINQLVDQVIYLRTYVEAAIDFPDEEIDFLADGKIERHLNDIIHQLAAVRQEAKQGSILREGMKAVIAGRPNAGKSSLLNALAGREAAIVTNIAGTTRDVLHEHIHLDGMPLHIIDTAGLREASDEVEKIGIQRAWNEIVAADHVLLMLDSTEQSAYAFKTEWAEFLAKLPPKMPITIIRNKVDLSGEVEGLTQLDGFTLIRLSAQTKIGVDVLREHLKTSMGYQSSTEGGFLARRRHLQALETAAKHLTQGHIQLTQFFAGELLAEELRLVQNTLSEITGQFTSDDLLGNIFSSFCIGK.

The (6S)-5-formyl-5,6,7,8-tetrahydrofolate site is built by R21, E78, and K118. One can recognise a TrmE-type G domain in the interval 214–375 (GMKAVIAGRP…LREHLKTSMG (162 aa)). N224 contributes to the K(+) binding site. GTP contacts are provided by residues 224–229 (NAGKSS), 243–249 (TNIAGTT), and 268–271 (DTAG). S228 contacts Mg(2+). 3 residues coordinate K(+): T243, I245, and T248. A Mg(2+)-binding site is contributed by T249. K452 serves as a coordination point for (6S)-5-formyl-5,6,7,8-tetrahydrofolate.

Belongs to the TRAFAC class TrmE-Era-EngA-EngB-Septin-like GTPase superfamily. TrmE GTPase family. Homodimer. Heterotetramer of two MnmE and two MnmG subunits. K(+) serves as cofactor.

The protein resides in the cytoplasm. Functionally, exhibits a very high intrinsic GTPase hydrolysis rate. Involved in the addition of a carboxymethylaminomethyl (cmnm) group at the wobble position (U34) of certain tRNAs, forming tRNA-cmnm(5)s(2)U34. The sequence is that of tRNA modification GTPase MnmE from Haemophilus ducreyi (strain 35000HP / ATCC 700724).